Here is a 1603-residue protein sequence, read N- to C-terminus: Vitellogenin-5 (1603 aa).

Positions 1–15 (MKSIIIASLVALAIA) are cleaved as a signal peptide. A Vitellogenin domain is found at 24–685 (FSPKSEYVYK…EKNAFLPKEV (662 aa)). One can recognise a VWFD domain in the interval 1306–1475 (ATCKVDQSEV…SYLLKNEECE (170 aa)). Disulfide bonds link Cys1308/Cys1438 and Cys1330/Cys1474. Residues 1492 to 1513 (NREEKKSDYESSSDYESNYDEK) form a disordered region.

In terms of processing, vitellogenin 5 undergoes little if any processing before being packaged into yolk platelets. As to expression, expressed in the intestine of adult hermaphrodites.

It is found in the secreted. Precursor of the egg-yolk proteins that are sources of nutrients during embryonic development. Together with other vitellogenins, may play a role in modulating life-span, acting via induction of autophagy and lysosomal lipolysis. This chain is Vitellogenin-5 (vit-5), found in Caenorhabditis elegans.